Consider the following 257-residue polypeptide: MLAKRIIPCLDVRDGQVVKGVQFRNHEIIGDIVPLAKRYAEEGADELVFYDITASSDGRVVDKSWVARVAEVIDIPFCVAGGIKSAEDAARILEFGADKVSINSPALANPQLITDLADKFGVQCIVVGIDSYYDKDTGKYQVYQFTGDEERTKATKWETRDWVQEVQKRGAGEIVLNMMNQDGVRSGYDIEQLNMVREVCKVPLIASGGAGAMEHFAEAYQKANVDGALAASVFHKQVINIGELKQYLKQQGIEVRL.

Active-site residues include aspartate 11 and aspartate 130.

It belongs to the HisA/HisF family. Heterodimer of HisH and HisF.

Its subcellular location is the cytoplasm. The catalysed reaction is 5-[(5-phospho-1-deoxy-D-ribulos-1-ylimino)methylamino]-1-(5-phospho-beta-D-ribosyl)imidazole-4-carboxamide + L-glutamine = D-erythro-1-(imidazol-4-yl)glycerol 3-phosphate + 5-amino-1-(5-phospho-beta-D-ribosyl)imidazole-4-carboxamide + L-glutamate + H(+). Its pathway is amino-acid biosynthesis; L-histidine biosynthesis; L-histidine from 5-phospho-alpha-D-ribose 1-diphosphate: step 5/9. Functionally, IGPS catalyzes the conversion of PRFAR and glutamine to IGP, AICAR and glutamate. The HisF subunit catalyzes the cyclization activity that produces IGP and AICAR from PRFAR using the ammonia provided by the HisH subunit. This chain is Imidazole glycerol phosphate synthase subunit HisF, found in Vibrio parahaemolyticus serotype O3:K6 (strain RIMD 2210633).